We begin with the raw amino-acid sequence, 123 residues long: Small ribosomal subunit protein uS13 (123 aa).

Positions 95–123 are disordered; sequence GLPVRGQKTKTNARTRKGPKRTVGRKKKK. The segment covering 101 to 123 has biased composition (basic residues); it reads QKTKTNARTRKGPKRTVGRKKKK.

This sequence belongs to the universal ribosomal protein uS13 family. Part of the 30S ribosomal subunit. Forms a loose heterodimer with protein S19. Forms two bridges to the 50S subunit in the 70S ribosome.

Its function is as follows. Located at the top of the head of the 30S subunit, it contacts several helices of the 16S rRNA. In the 70S ribosome it contacts the 23S rRNA (bridge B1a) and protein L5 of the 50S subunit (bridge B1b), connecting the 2 subunits; these bridges are implicated in subunit movement. Contacts the tRNAs in the A and P-sites. The protein is Small ribosomal subunit protein uS13 of Alkaliphilus metalliredigens (strain QYMF).